A 596-amino-acid chain; its full sequence is Trehalase (596 aa).

An N-terminal signal peptide occupies residues 1 to 23 (MFKLPTISLLLVSWSCLVALSQA). Substrate contacts are provided by residues Arg193, 200–201 (WD), Asn237, and 246–248 (RSQ). Residues Asn288 and Asn293 are each glycosylated (N-linked (GlcNAc...) asparagine). Residues 303–323 (SSGPRPESYREDVETGEEFPT) are disordered. Substrate-binding positions include 307-309 (RPE) and Gly341. The Proton donor/acceptor role is filled by Asp343. Asn359, Asn451, and Asn516 each carry an N-linked (GlcNAc...) asparagine glycan. Catalysis depends on Glu541, which acts as the Proton donor/acceptor. Glu556 provides a ligand contact to substrate.

The protein belongs to the glycosyl hydrolase 37 family. As to expression, in the adult brain predominantly expressed in glial cells (at protein level).

It carries out the reaction alpha,alpha-trehalose + H2O = alpha-D-glucose + beta-D-glucose. In terms of biological role, enzyme that cleaves trehalose to produce 2 glucose molecules that can be used by the glycolytic pathway. Glycolysis is essential in glial cells but not in neurons; neurons rely on the citric acid cycle for their energy needs, and on lactate and alanine secreted into the hemolymph by glial cells to fuel it. This is Trehalase from Drosophila melanogaster (Fruit fly).